We begin with the raw amino-acid sequence, 1358 residues long: Xanthine dehydrogenase/oxidase (1358 aa).

The 2Fe-2S ferredoxin-type domain maps to 8 to 95; that stretch reads DELVFFVNGK…HVAVTTVEGI (88 aa). 8 residues coordinate [2Fe-2S] cluster: Cys-47, Cys-52, Cys-55, Cys-77, Cys-117, Cys-120, Cys-152, and Cys-154. The 186-residue stretch at 255-440 folds into the FAD-binding PCMH-type domain; it reads FKGERVMWIQ…LSVEIPYSKE (186 aa). FAD-binding positions include 283–290, Phe-363, 373–377, Asp-386, Leu-430, and Lys-448; these read LVVGNTEV and ALGGN. Mo-molybdopterin is bound by residues Gln-796 and Phe-827. Residues Glu-831 and Arg-909 each coordinate substrate. Position 941 (Arg-941) interacts with Mo-molybdopterin. Substrate-binding residues include Phe-943 and Thr-1039. Ala-1108 contributes to the Mo-molybdopterin binding site. Glu-1290 acts as the Proton acceptor in catalysis.

Belongs to the xanthine dehydrogenase family. Homodimer. The cofactor is FAD. Mo-molybdopterin is required as a cofactor. It depends on [2Fe-2S] cluster as a cofactor. As to expression, detected in liver (at protein level).

The protein resides in the peroxisome. The protein localises to the cytoplasm. The enzyme catalyses xanthine + NAD(+) + H2O = urate + NADH + H(+). It catalyses the reaction hypoxanthine + NAD(+) + H2O = xanthine + NADH + H(+). It carries out the reaction xanthine + O2 + H2O = urate + H2O2. Functionally, key enzyme in purine degradation. Catalyzes the oxidation of hypoxanthine to xanthine. Catalyzes the oxidation of xanthine to uric acid. Contributes to the generation of reactive oxygen species. In Gallus gallus (Chicken), this protein is Xanthine dehydrogenase/oxidase (XDH).